Here is a 257-residue protein sequence, read N- to C-terminus: Ribonuclease PH (257 aa).

Phosphate is bound by residues Arg-88 and 126-128 (GTR).

Belongs to the RNase PH family. In terms of assembly, homohexameric ring arranged as a trimer of dimers.

It catalyses the reaction tRNA(n+1) + phosphate = tRNA(n) + a ribonucleoside 5'-diphosphate. In terms of biological role, phosphorolytic 3'-5' exoribonuclease that plays an important role in tRNA 3'-end maturation. Removes nucleotide residues following the 3'-CCA terminus of tRNAs; can also add nucleotides to the ends of RNA molecules by using nucleoside diphosphates as substrates, but this may not be physiologically important. Probably plays a role in initiation of 16S rRNA degradation (leading to ribosome degradation) during starvation. This is Ribonuclease PH from Nocardia farcinica (strain IFM 10152).